The following is a 249-amino-acid chain: Glucosamine-6-phosphate deaminase (249 aa).

D67 serves as the catalytic Proton acceptor; for enolization step. N136 functions as the For ring-opening step in the catalytic mechanism. Residue H138 is the Proton acceptor; for ring-opening step of the active site. The For ring-opening step role is filled by E143.

This sequence belongs to the glucosamine/galactosamine-6-phosphate isomerase family. NagB subfamily.

The enzyme catalyses alpha-D-glucosamine 6-phosphate + H2O = beta-D-fructose 6-phosphate + NH4(+). The protein operates within amino-sugar metabolism; N-acetylneuraminate degradation; D-fructose 6-phosphate from N-acetylneuraminate: step 5/5. Functionally, catalyzes the reversible isomerization-deamination of glucosamine 6-phosphate (GlcN6P) to form fructose 6-phosphate (Fru6P) and ammonium ion. This is Glucosamine-6-phosphate deaminase from Clostridium botulinum (strain Alaska E43 / Type E3).